The sequence spans 398 residues: Spermatogenesis associated 6-like protein (398 aa).

Residues 170–215 (KLNGPANNRKKKPKEKNSDQLSKGTPFWGPSPQRLHLHRPTQRNPG) form a disordered region. Phosphoserine occurs at positions 269 and 272.

This sequence belongs to the SPATA6 family.

This is Spermatogenesis associated 6-like protein (Spata6l) from Rattus norvegicus (Rat).